A 456-amino-acid chain; its full sequence is UDP-N-acetylmuramate--L-alanine ligase (456 aa).

118–124 (GTHGKST) is an ATP binding site.

This sequence belongs to the MurCDEF family.

It is found in the cytoplasm. It carries out the reaction UDP-N-acetyl-alpha-D-muramate + L-alanine + ATP = UDP-N-acetyl-alpha-D-muramoyl-L-alanine + ADP + phosphate + H(+). Its pathway is cell wall biogenesis; peptidoglycan biosynthesis. Its function is as follows. Cell wall formation. The sequence is that of UDP-N-acetylmuramate--L-alanine ligase from Paenarthrobacter aurescens (strain TC1).